Here is a 248-residue protein sequence, read N- to C-terminus: Large ribosomal subunit protein uL10m (248 aa).

Residues 1–24 (MATLIQRSLSLAKSSTPALQFLRF) constitute a mitochondrion transit peptide.

The protein belongs to the universal ribosomal protein uL10 family. As to quaternary structure, component of the mitochondrial ribosome large subunit (39S) which comprises a 16S rRNA and about 50 distinct proteins.

It localises to the mitochondrion. This is Large ribosomal subunit protein uL10m (mRpL10) from Drosophila melanogaster (Fruit fly).